Reading from the N-terminus, the 98-residue chain is NADH-ubiquinone oxidoreductase chain 4L (98 aa).

A run of 3 helical transmembrane segments spans residues 2 to 22 (PSIS…MLIF), 29 to 49 (SLLC…LTIL), and 61 to 81 (ILLL…LVTV).

It belongs to the complex I subunit 4L family. As to quaternary structure, core subunit of respiratory chain NADH dehydrogenase (Complex I) which is composed of 45 different subunits.

The protein resides in the mitochondrion inner membrane. The enzyme catalyses a ubiquinone + NADH + 5 H(+)(in) = a ubiquinol + NAD(+) + 4 H(+)(out). Functionally, core subunit of the mitochondrial membrane respiratory chain NADH dehydrogenase (Complex I) which catalyzes electron transfer from NADH through the respiratory chain, using ubiquinone as an electron acceptor. Part of the enzyme membrane arm which is embedded in the lipid bilayer and involved in proton translocation. The sequence is that of NADH-ubiquinone oxidoreductase chain 4L (MT-ND4L) from Eulemur rubriventer (Red-bellied lemur).